We begin with the raw amino-acid sequence, 119 residues long: Large ribosomal subunit protein uL18 (119 aa).

The protein belongs to the universal ribosomal protein uL18 family. In terms of assembly, part of the 50S ribosomal subunit; part of the 5S rRNA/L5/L18/L25 subcomplex. Contacts the 5S and 23S rRNAs.

Its function is as follows. This is one of the proteins that bind and probably mediate the attachment of the 5S RNA into the large ribosomal subunit, where it forms part of the central protuberance. The polypeptide is Large ribosomal subunit protein uL18 (Roseobacter denitrificans (strain ATCC 33942 / OCh 114) (Erythrobacter sp. (strain OCh 114))).